The following is a 128-amino-acid chain: Large ribosomal subunit protein bL17 (128 aa).

Belongs to the bacterial ribosomal protein bL17 family. As to quaternary structure, part of the 50S ribosomal subunit. Contacts protein L32.

The chain is Large ribosomal subunit protein bL17 from Haemophilus influenzae (strain 86-028NP).